A 485-amino-acid chain; its full sequence is ATP-dependent rRNA helicase RRP3 (485 aa).

Residues 1–10 are compositionally biased toward basic residues; it reads MPVLKKRKLA. The tract at residues 1-55 is disordered; sequence MPVLKKRKLAHTAQPDPIVSDLESSSSEASQQSHDEQLTAANEQDDESPQVQREE. The span at 20-32 shows a compositional bias: low complexity; sequence SDLESSSSEASQQ. A Q motif motif is present at residues 59–87; the sequence is KSFKDLGIIDSLCEACEALGYKSPTPIQA. The 172-residue stretch at 90–261 folds into the Helicase ATP-binding domain; the sequence is IPLALQGRDL…RASLSNPLRV (172 aa). 103–110 lines the ATP pocket; the sequence is AETGSGKT. Residues 209–212 carry the DEAD box motif; it reads DEAD. The 149-residue stretch at 285-433 folds into the Helicase C-terminal domain; sequence YKDIYLVYLL…EYKVEKEEVM (149 aa). Residues 449–458 are compositionally biased toward basic and acidic residues; it reads EMKDLHEKRG. Positions 449-485 are disordered; sequence EMKDLHEKRGSRGATLKGRRPAKGAKRGRDEMDREEG. Positions 465-474 are enriched in basic residues; sequence KGRRPAKGAK. Basic and acidic residues predominate over residues 475–485; the sequence is RGRDEMDREEG.

Belongs to the DEAD box helicase family. DDX47/RRP3 subfamily. As to quaternary structure, interacts with the SSU processome.

The protein localises to the nucleus. It carries out the reaction ATP + H2O = ADP + phosphate + H(+). Its function is as follows. ATP-dependent rRNA helicase required for pre-ribosomal RNA processing. Involved in the maturation of the 35S-pre-rRNA and to its cleavage to mature 18S rRNA. In Ajellomyces capsulatus (strain NAm1 / WU24) (Darling's disease fungus), this protein is ATP-dependent rRNA helicase RRP3.